Consider the following 445-residue polypeptide: MTFQNKKILVAGLGGTGISMIAYLRKNGAEVAAYDAELKPERVSQIGKMFDGLVFYTGRLKDALSNGFDILALSPGISERQPDIEAFKRNGGRVLGDIELLADIVNRRGDKVIAITGSNGKTTVTSLVGYLCIKCGLDTVIAGNIGAPVLEAELQREGKKADVWVLELSSFQLENTESLRPTAATVLNISEDHLDRYDDLLDYAHTKAKIFRGDGVQVLNADDAFCRAMKRAGREVKWFSLEYEADFWLERETGRLKQGNEDLIATQDIPLQGLHNATNVMAAVALCEAVGLPREALLEHVKTFQGLPHRVEKIGEKNGVVFIDDSKGTNVGATAAAIAGLQNPLFVILGGMGKGQDFTPLRDALAGKAKGVFLIGVDAPQIRRDLDGCDLNMTDCATLEEAVQKAYAQAEAGDIVLLSPACASFDMFKGYAHRSEVFIGAFKAL.

117-123 (GSNGKTT) contacts ATP.

Belongs to the MurCDEF family.

The protein localises to the cytoplasm. It catalyses the reaction UDP-N-acetyl-alpha-D-muramoyl-L-alanine + D-glutamate + ATP = UDP-N-acetyl-alpha-D-muramoyl-L-alanyl-D-glutamate + ADP + phosphate + H(+). It participates in cell wall biogenesis; peptidoglycan biosynthesis. Cell wall formation. Catalyzes the addition of glutamate to the nucleotide precursor UDP-N-acetylmuramoyl-L-alanine (UMA). The polypeptide is UDP-N-acetylmuramoylalanine--D-glutamate ligase (Neisseria meningitidis serogroup A / serotype 4A (strain DSM 15465 / Z2491)).